A 130-amino-acid polypeptide reads, in one-letter code: Small ribosomal subunit protein uS8 (130 aa).

This sequence belongs to the universal ribosomal protein uS8 family. Part of the 30S ribosomal subunit. Contacts proteins S5 and S12.

In terms of biological role, one of the primary rRNA binding proteins, it binds directly to 16S rRNA central domain where it helps coordinate assembly of the platform of the 30S subunit. In Vibrio parahaemolyticus serotype O3:K6 (strain RIMD 2210633), this protein is Small ribosomal subunit protein uS8.